Reading from the N-terminus, the 489-residue chain is UDP-N-acetylmuramoyl-L-alanyl-D-glutamate--2,6-diaminopimelate ligase (489 aa).

Serine 30 contributes to the UDP-N-acetyl-alpha-D-muramoyl-L-alanyl-D-glutamate binding site. 108–114 (GTNGKTT) provides a ligand contact to ATP. Residues asparagine 149, 150-151 (TT), serine 177, glutamine 183, and arginine 185 contribute to the UDP-N-acetyl-alpha-D-muramoyl-L-alanyl-D-glutamate site. Lysine 217 bears the N6-carboxylysine mark. Meso-2,6-diaminopimelate contacts are provided by residues arginine 383, 407-410 (DNPR), glycine 459, and glutamate 463. The short motif at 407–410 (DNPR) is the Meso-diaminopimelate recognition motif element.

It belongs to the MurCDEF family. MurE subfamily. Requires Mg(2+) as cofactor. In terms of processing, carboxylation is probably crucial for Mg(2+) binding and, consequently, for the gamma-phosphate positioning of ATP.

The protein localises to the cytoplasm. The enzyme catalyses UDP-N-acetyl-alpha-D-muramoyl-L-alanyl-D-glutamate + meso-2,6-diaminopimelate + ATP = UDP-N-acetyl-alpha-D-muramoyl-L-alanyl-gamma-D-glutamyl-meso-2,6-diaminopimelate + ADP + phosphate + H(+). It participates in cell wall biogenesis; peptidoglycan biosynthesis. Catalyzes the addition of meso-diaminopimelic acid to the nucleotide precursor UDP-N-acetylmuramoyl-L-alanyl-D-glutamate (UMAG) in the biosynthesis of bacterial cell-wall peptidoglycan. In Geobacillus thermodenitrificans (strain NG80-2), this protein is UDP-N-acetylmuramoyl-L-alanyl-D-glutamate--2,6-diaminopimelate ligase.